We begin with the raw amino-acid sequence, 578 residues long: MSHQFSSQSAFSSMSRRVYSTSSSAGSGGGSPAVGSVCYARGRCGGGGYGIHGRGFGSRSLYNLGGSRSISINLMGRSTSGFCQGGGVGGFGGGRGFGVGSTGAGGFGGGGFGGAGFGTSNFGLGGFGPYCPPGGIQEVTINQSLLEPLHLEVDPEIQRIKTQEREQIMVLNNKFASFIDKVRFLEQQNQVLQTKWELLQQVNTSTGTNNLEPLLENYIGDLRRQVDLLSAEQMRQNAEVRSMQDVVEDYKSKYEDEINKRTGSENDFVVLKKDVDAAYVSKVDLESRVDTLTGEVNFLKYLFLTELSQVQTHISDTNVILSMDNNRSLDLDSIIDAVRTQYELIAQRSKDEAEALYQTKYQELQITAGRHGDDLKNSKMEIAELNRTVQRLQAEISNVKKQIEQMQSLISDAEERGEQALQDAWQKLQDLEEALQQSKEELARLLRDYQAMLGVKLSLDVEIATYRQLLEGEESRMSGELQSHVSISVQNSQVSVNGGAGGGGSYGSGGYGGGSGGGYGGGRSYRGGGARGRSGGGYGSGCGGGGGSYGGSGRSGRGSSRVQIIQTSTNTSHRRILE.

Positions 1–163 (MSHQFSSQSA…DPEIQRIKTQ (163 aa)) are head. Arg95 bears the Omega-N-methylarginine mark. The segment at 164–200 (EREQIMVLNNKFASFIDKVRFLEQQNQVLQTKWELLQ) is coil 1A. In terms of domain architecture, IF rod spans 164–477 (EREQIMVLNN…QLLEGEESRM (314 aa)). A linker 1 region spans residues 201-219 (QVNTSTGTNNLEPLLENYI). The coil 1B stretch occupies residues 220 to 311 (GDLRRQVDLL…LFLTELSQVQ (92 aa)). The tract at residues 312-335 (THISDTNVILSMDNNRSLDLDSII) is linker 12. The segment at 336–474 (DAVRTQYELI…TYRQLLEGEE (139 aa)) is coil 2. The segment at 475 to 578 (SRMSGELQSH…TNTSHRRILE (104 aa)) is tail. Position 523 is an omega-N-methylarginine (Arg523). Over residues 547-556 (GSYGGSGRSG) the composition is skewed to gly residues. The tract at residues 547–578 (GSYGGSGRSGRGSSRVQIIQTSTNTSHRRILE) is disordered. The span at 562–571 (VQIIQTSTNT) shows a compositional bias: polar residues.

The protein belongs to the intermediate filament family. Undergoes deimination of some arginine residues (citrullination). Expressed exclusively in skin.

The chain is Keratin, type II cytoskeletal 1b (KRT77) from Homo sapiens (Human).